A 565-amino-acid chain; its full sequence is NAD-dependent malic enzyme (565 aa).

Catalysis depends on Tyr104, which acts as the Proton donor. Residue Arg157 participates in NAD(+) binding. Lys175 (proton acceptor) is an active-site residue. A divalent metal cation-binding residues include Glu246, Asp247, and Asp270. NAD(+) is bound by residues Asp270 and Asn418.

This sequence belongs to the malic enzymes family. As to quaternary structure, homotetramer. It depends on Mg(2+) as a cofactor. Mn(2+) serves as cofactor.

The catalysed reaction is (S)-malate + NAD(+) = pyruvate + CO2 + NADH. The enzyme catalyses oxaloacetate + H(+) = pyruvate + CO2. This Escherichia coli (strain SMS-3-5 / SECEC) protein is NAD-dependent malic enzyme.